Here is a 200-residue protein sequence, read N- to C-terminus: Recombination protein RecR (200 aa).

The C4-type zinc-finger motif lies at 59–74 (CSVCFHLSADPVCDIC). A Toprim domain is found at 82–176 (TVICVVADSR…RVTRIAFGLP (95 aa)).

This sequence belongs to the RecR family.

In terms of biological role, may play a role in DNA repair. It seems to be involved in an RecBC-independent recombinational process of DNA repair. It may act with RecF and RecO. This Acaryochloris marina (strain MBIC 11017) protein is Recombination protein RecR.